Reading from the N-terminus, the 472-residue chain is MIFVIESKLLQIYRNRNRNINFYTTMDNIMSAEYYLSLYAKYNSKNLDVFRNMLQAIEPSGNNYHILHAYCGIKGLDERFVEELLHRGYSPNETDDDGNYPLHIASKINNNRIVAMLLTHGADPNACDKHNKTPLYYLSGTDDEVIERINLLVQYGAKINNSVDEEGCGPLLACTDPSERVFKKIMSIGFEARIVDKFGKNHIHRHLMSDNPKASTISWMMKLGISPSKPDHDGNTPLHIVCSKTVKNVDIIDLLLPSTDVNKQNKFGDSPLTLLIKTLSPAHLINKLLSTSNVITDQTVNICIFYDRDDVLEIINDKGKQYDSTDFKMAVEVGSIRCVKYLLDNDIICEDAMYYAVLSEYETMVDYLLFNHFSVDFVVNGHTCMSECVRLNNPVILSKLMLHNPTSETMYLTMKAIEKDRLDKSIIIPFIAYFVLMHPDFCKNRRYFTSYKRFVTDYVHEGVSYEVFDDYF.

ANK repeat units lie at residues 97–126 (DGNYPLHIASKINNNRIVAMLLTHGADPNA), 130–161 (HNKTPLYYLSGTDDEVIERINLLVQYGAKINN), 233–263 (DGNTPLHIVCSKTVKNVDIIDLLLPSTDVNK), 267–297 (FGDSPLTLLIKTLSPAHLINKLLSTSNVITD), 322–351 (YDSTDFKMAVEVGSIRCVKYLLDNDIICED), and 353–377 (MYYAVLSEYETMVDYLLFNHFSVDF).

The protein belongs to the orthopoxvirus OPG037 protein family. As to quaternary structure, may interact with host caspase-9-Apaf-1 complex.

It localises to the host cytoplasm. Inhibits host apoptosis. Acts by associating with host apoptosome. This Vaccinia virus (strain Western Reserve) (VACV) protein is Inhibitor of Apoptosis OPG037 (OPG037).